Here is a 344-residue protein sequence, read N- to C-terminus: Protein pelota homolog (344 aa).

The protein belongs to the eukaryotic release factor 1 family. Pelota subfamily. Monomer. Requires a divalent metal cation as cofactor.

The protein resides in the cytoplasm. In terms of biological role, may function in recognizing stalled ribosomes, interact with stem-loop structures in stalled mRNA molecules, and effect endonucleolytic cleavage of the mRNA. May play a role in the release non-functional ribosomes and degradation of damaged mRNAs. Has endoribonuclease activity. This is Protein pelota homolog from Saccharolobus islandicus (strain M.14.25 / Kamchatka #1) (Sulfolobus islandicus).